The primary structure comprises 337 residues: U11/U12 small nuclear ribonucleoprotein 48 kDa protein (337 aa).

Residues 55 to 82 (IAICPYDSNHRMPKSSLTKHMESCRLRK) form a CHHC U11-48K-type zinc finger. Residues Cys58, His64, His74, and Cys78 each coordinate Zn(2+). Residues Lys87 and Lys104 each participate in a glycyl lysine isopeptide (Lys-Gly) (interchain with G-Cter in SUMO2) cross-link. The span at 255-276 (HWQEEQGRAGDAAEKNEERRSA) shows a compositional bias: basic and acidic residues. Positions 255–337 (HWQEEQGRAG…HSHKRRKQKI (83 aa)) are disordered. Residues 294–310 (RHRRARSRSPHKRKRNK) show a composition bias toward basic residues. The segment covering 311 to 326 (DKSSESRRRKERDGER) has biased composition (basic and acidic residues). A compositionally biased stretch (basic residues) spans 327 to 337 (HHSHKRRKQKI).

As to quaternary structure, component of the U11/U12 snRNPs that are part of the U12-type spliceosome. Not found in the major spliceosome.

Its subcellular location is the nucleus. Its function is as follows. Likely involved in U12-type 5' splice site recognition. The polypeptide is U11/U12 small nuclear ribonucleoprotein 48 kDa protein (Snrnp48) (Mus musculus (Mouse)).